We begin with the raw amino-acid sequence, 1470 residues long: Niemann-Pick type C1-related protein (1470 aa).

Over 1-3 (MFV) the chain is Cytoplasmic. An intramembrane segment occupies 4–34 (KNFIHKLKELKQKSLDKFANLLYDYGGYVYD). A topological domain (cytoplasmic) is located at residue R35. A helical membrane pass occupies residues 36 to 56 (PCTFIICSLICCLLLTCGFYF). The Extracellular segment spans residues 57–493 (KEHEKDIYKL…DEVDRISKID (437 aa)). 4 N-linked (GlcNAc...) asparagine glycosylation sites follow: N78, N165, N294, and N361. A helical transmembrane segment spans residues 494–514 (NLTRLLLLIGVLLIFMYALFN). The SSD domain maps to 494–653 (NLTRLLLLIG…LTFLLSFLCI (160 aa)). The Cytoplasmic segment spans residues 515–524 (NVTSVLYRSK). Residues 525–549 (PLCAVMGIFCGFLGFLSGSGFLYFL) form a helical membrane-spanning segment. The Extracellular portion of the chain corresponds to 550–554 (GVKSV). A helical transmembrane segment spans residues 555-582 (PPAETVPFLVIGVGVDDVFVILNSYSLL). Topologically, residues 583–587 (FMVKD) are cytoplasmic. Residues 588–619 (NKKRIQMCLKDSALAITVTTLTNIIAFLISAI) form a helical membrane-spanning segment. Residues 620–622 (SPF) are Extracellular-facing. A helical transmembrane segment spans residues 623 to 659 (YSICAFSLFTASSLFFGYLMVLTFLLSFLCIEAKLEK). Residues 660 to 663 (KKRN) are Cytoplasmic-facing. An intramembrane segment occupies 664–673 (IFTGTFHLFR). Over 674 to 1057 (SIFMKSSKKN…IYEEPKGNIG (384 aa)) the chain is Cytoplasmic. The stretch at 1058–1073 (KYFRSLVKNYYVPFLS) is an intramembrane region. S1074 is a topological domain (cytoplasmic). A helical membrane pass occupies residues 1075-1098 (RFGKTIVYIMFTIIIAMSIYGCTL). The Extracellular portion of the chain corresponds to 1099–1300 (MKKGIKYDKA…NHNVQMVCFH (202 aa)). N-linked (GlcNAc...) asparagine glycosylation occurs at N1218. The helical transmembrane segment at 1301–1334 (LSSIFNETDESIIEVTLINLGITILTILVVTAYI) threads the bilayer. Over 1335 to 1337 (IKG) the chain is Cytoplasmic. A helical membrane pass occupies residues 1338-1361 (FYSCVIIALIIFLIDLCIFGFMCL). Residues 1362–1367 (CGITMN) are Extracellular-facing. A helical membrane pass occupies residues 1368–1394 (IISMVILVLSVGFSIDHTSHIVQAFSH). At 1395–1399 (SMGRT) the chain is on the cytoplasmic side. Residues 1400–1431 (RDEKMKESLHLMIGPVLHSGLSTWFVISTLFF) form a helical membrane-spanning segment. Over 1432–1434 (SNK) the chain is Extracellular. The chain crosses the membrane as a helical span at residues 1435-1466 (DFTVIFFQTLSLVLFFSITFSSMFLPVLLSSF). Residues 1467–1470 (GPLH) lie on the Cytoplasmic side of the membrane.

Belongs to the patched family.

Its subcellular location is the cell membrane. The catalysed reaction is cholesterol(in) = cholesterol(out). Its function is as follows. Facilitates cholesterol efflux from membranes in a pH-dependent manner. Required for maintaining normal parasite plasma membrane lipid composition. Required for the proper functioning of digestive vacuole. Required for the viability of blood-stage parasites. The sequence is that of Niemann-Pick type C1-related protein from Plasmodium falciparum (isolate 3D7).